Reading from the N-terminus, the 738-residue chain is Ethylene receptor (738 aa).

The next 3 membrane-spanning stretches (helical) occupy residues 23-43 (ISDF…IYFV), 54-74 (VLVQ…INLW), and 89-109 (IAKV…VHII). The Cu cation site is built by cysteine 65 and histidine 69. In terms of domain architecture, GAF spans 158-307 (DRHTILRTTL…VVADQVAVAL (150 aa)). Positions 350 to 589 (VMNHEMRTPM…IFIVKLGIPE (240 aa)) constitute a Histidine kinase domain. Residue histidine 353 is modified to Phosphohistidine; by autocatalysis. Positions 615–730 (KVLLMDDNGV…KMRSVLSDLL (116 aa)) constitute a Response regulatory domain. At aspartate 663 the chain carries 4-aspartylphosphate.

The protein belongs to the ethylene receptor family. As to quaternary structure, homodimer; disulfide-linked. Requires Cu cation as cofactor. Post-translationally, activation probably requires a transfer of a phosphate group between a His in the transmitter domain and an Asp of the receiver domain. Higher expression in arils than in seeds.

The protein resides in the endoplasmic reticulum membrane. The enzyme catalyses ATP + protein L-histidine = ADP + protein N-phospho-L-histidine.. Functionally, may act early in the ethylene signal transduction pathway, possibly as an ethylene receptor, or as a regulator of the pathway. This Passiflora edulis (Passion fruit) protein is Ethylene receptor (ETR1).